The sequence spans 493 residues: Succinate-semialdehyde dehydrogenase [NADP(+)] 2 (493 aa).

242-247 serves as a coordination point for NAD(+); that stretch reads GSTNVG. Glutamate 264 is an active-site residue. Cysteine 298 (nucleophile) is an active-site residue.

Belongs to the aldehyde dehydrogenase family. In terms of assembly, homotetramer.

The protein localises to the cytoplasm. It catalyses the reaction succinate semialdehyde + NAD(+) + H2O = succinate + NADH + 2 H(+). The enzyme catalyses succinate semialdehyde + NADP(+) + H2O = succinate + NADPH + 2 H(+). The protein operates within amino-acid degradation; 4-aminobutanoate degradation. Catalyzes the oxidation of succinate semialdehyde to succinate. Can utilize both NAD(+) or NADP(+) as a coenzyme. Functions in the GABA shunt, which allows to bypass 2 reactions in the TCA cycle by removing alpha-ketoglutarate from the cycle and feeding succinate and NADH back into the cycle. The polypeptide is Succinate-semialdehyde dehydrogenase [NADP(+)] 2 (ssd2) (Schizosaccharomyces pombe (strain 972 / ATCC 24843) (Fission yeast)).